We begin with the raw amino-acid sequence, 808 residues long: LisH domain-containing protein ARMC9 (808 aa).

The LisH domain maps to 7 to 39 (YEADLLGLVKEFLNFGEFQETLETFTKECKTKG). Positions 196–230 (ITLYKESLHNNQELLQQLQQQLMETEHKARTYKKC) form a coiled coil. Disordered stretches follow at residues 576–599 (FDESIESDDEEEEKDDEEDEDALE), 650–709 (PLQR…DYCV), and 742–808 (GMEK…SYRK). The span at 579–599 (SIESDDEEEEKDDEEDEDALE) shows a compositional bias: acidic residues. Composition is skewed to polar residues over residues 655 to 668 (VTPSTHRVMNTVRK), 677 to 709 (TNTFKTSQANMSVVSSRPPTRSGSRASTSDYCV), and 775 to 784 (IAPQFSQSGP). Residues 785–808 (QQTSYSSSAGSSTRSRQSTQSYRK) are compositionally biased toward low complexity.

It localises to the cytoplasm. The protein resides in the cytoskeleton. It is found in the cilium basal body. The protein localises to the cell projection. Its subcellular location is the cilium. It localises to the microtubule organizing center. The protein resides in the centrosome. It is found in the centriole. In terms of biological role, involved in ciliogenesis. It is required for appropriate acetylation and polyglutamylation of ciliary microtubules, and regulation of cilium length. Acts as a positive regulator of hedgehog (Hh)signaling. The protein is LisH domain-containing protein ARMC9 (armc9) of Xenopus tropicalis (Western clawed frog).